A 149-amino-acid chain; its full sequence is Large ribosomal subunit protein bL9 (149 aa).

It belongs to the bacterial ribosomal protein bL9 family.

Its function is as follows. Binds to the 23S rRNA. This Actinobacillus succinogenes (strain ATCC 55618 / DSM 22257 / CCUG 43843 / 130Z) protein is Large ribosomal subunit protein bL9.